The sequence spans 208 residues: Small ribosomal subunit protein uS4 (208 aa).

The S4 RNA-binding domain maps to 98–163; the sequence is TRLDNVVFRL…TPLFKEIVDG (66 aa).

This sequence belongs to the universal ribosomal protein uS4 family. Part of the 30S ribosomal subunit. Contacts protein S5. The interaction surface between S4 and S5 is involved in control of translational fidelity.

Functionally, one of the primary rRNA binding proteins, it binds directly to 16S rRNA where it nucleates assembly of the body of the 30S subunit. In terms of biological role, with S5 and S12 plays an important role in translational accuracy. This is Small ribosomal subunit protein uS4 from Heliobacterium modesticaldum (strain ATCC 51547 / Ice1).